A 468-amino-acid chain; its full sequence is Putative magnesium transporter MRS2-G (468 aa).

Disordered stretches follow at residues 1-76 and 183-204; these read MGRR…AGKV and GQPG…QVPR. Low complexity-rich tracts occupy residues 14-23 and 31-45; these read ASNASTSSST and RLPS…SSPS. Positions 46–67 are enriched in pro residues; sequence PASPSPPPPSASHPAPPSPPLA. Over residues 187-201 the composition is skewed to basic and acidic residues; it reads GDDHGEKHDDSHGDQ. Transmembrane regions (helical) follow at residues 402 to 422 and 437 to 457; these read LTLT…GAFA and FFWP…IVLL.

Belongs to the CorA metal ion transporter (MIT) (TC 1.A.35.5) family. As to quaternary structure, interacts with CYCB2-2.

Its subcellular location is the membrane. In terms of biological role, putative magnesium transporter. This is Putative magnesium transporter MRS2-G (MRS2-G) from Oryza sativa subsp. japonica (Rice).